Reading from the N-terminus, the 448-residue chain is Exodeoxyribonuclease 7 large subunit (448 aa).

The protein belongs to the XseA family. In terms of assembly, heterooligomer composed of large and small subunits.

It localises to the cytoplasm. It carries out the reaction Exonucleolytic cleavage in either 5'- to 3'- or 3'- to 5'-direction to yield nucleoside 5'-phosphates.. Bidirectionally degrades single-stranded DNA into large acid-insoluble oligonucleotides, which are then degraded further into small acid-soluble oligonucleotides. This is Exodeoxyribonuclease 7 large subunit from Shewanella sp. (strain ANA-3).